The sequence spans 152 residues: Methylglyoxal synthase (152 aa).

The region spanning 5–152 is the MGS-like domain; sequence TRTVQAQKHI…YQLYLQQRLK (148 aa). Residues His-19, Lys-23, 45 to 48, and 65 to 66 contribute to the substrate site; these read TGTT and SG. Asp-71 serves as the catalytic Proton donor/acceptor. His-98 provides a ligand contact to substrate.

It belongs to the methylglyoxal synthase family.

The enzyme catalyses dihydroxyacetone phosphate = methylglyoxal + phosphate. Its function is as follows. Catalyzes the formation of methylglyoxal from dihydroxyacetone phosphate. This is Methylglyoxal synthase from Erwinia tasmaniensis (strain DSM 17950 / CFBP 7177 / CIP 109463 / NCPPB 4357 / Et1/99).